The primary structure comprises 217 residues: 3,4-dihydroxy-2-butanone 4-phosphate synthase (217 aa).

Residues 37 to 38 (RE), Asp-42, 150 to 154 (RGGHT), and Glu-174 contribute to the D-ribulose 5-phosphate site. Glu-38 lines the Mg(2+) pocket. Residue His-153 participates in Mg(2+) binding.

The protein belongs to the DHBP synthase family. Homodimer. Mg(2+) serves as cofactor. The cofactor is Mn(2+).

The catalysed reaction is D-ribulose 5-phosphate = (2S)-2-hydroxy-3-oxobutyl phosphate + formate + H(+). Its pathway is cofactor biosynthesis; riboflavin biosynthesis; 2-hydroxy-3-oxobutyl phosphate from D-ribulose 5-phosphate: step 1/1. Catalyzes the conversion of D-ribulose 5-phosphate to formate and 3,4-dihydroxy-2-butanone 4-phosphate. The protein is 3,4-dihydroxy-2-butanone 4-phosphate synthase of Proteus mirabilis (strain HI4320).